A 95-amino-acid polypeptide reads, in one-letter code: Citrate lyase acyl carrier protein (95 aa).

Position 14 is an O-(phosphoribosyl dephospho-coenzyme A)serine (Ser-14).

It belongs to the CitD family. In terms of assembly, oligomer with a subunit composition of (alpha,beta,gamma)6.

The protein localises to the cytoplasm. Functionally, covalent carrier of the coenzyme of citrate lyase. This is Citrate lyase acyl carrier protein from Haemophilus influenzae (strain ATCC 51907 / DSM 11121 / KW20 / Rd).